The sequence spans 192 residues: Pyridoxal 5'-phosphate synthase subunit PdxT (192 aa).

47–49 (GES) serves as a coordination point for L-glutamine. Residue Cys-79 is the Nucleophile of the active site. L-glutamine is bound by residues Arg-106 and 134-135 (IR). Active-site charge relay system residues include His-170 and Glu-172.

Belongs to the glutaminase PdxT/SNO family. In terms of assembly, in the presence of PdxS, forms a dodecamer of heterodimers. Only shows activity in the heterodimer.

The enzyme catalyses aldehydo-D-ribose 5-phosphate + D-glyceraldehyde 3-phosphate + L-glutamine = pyridoxal 5'-phosphate + L-glutamate + phosphate + 3 H2O + H(+). It carries out the reaction L-glutamine + H2O = L-glutamate + NH4(+). Its pathway is cofactor biosynthesis; pyridoxal 5'-phosphate biosynthesis. Catalyzes the hydrolysis of glutamine to glutamate and ammonia as part of the biosynthesis of pyridoxal 5'-phosphate. The resulting ammonia molecule is channeled to the active site of PdxS. This Geobacillus sp. (strain WCH70) protein is Pyridoxal 5'-phosphate synthase subunit PdxT.